Reading from the N-terminus, the 471-residue chain is Probable multidrug-efflux transporter MT1670 (471 aa).

The next 14 helical transmembrane spans lie at 23–43, 55–75, 91–111, 116–136, 146–166, 174–194, 213–233, 237–257, 279–299, 308–328, 337–357, 366–386, 410–430, and 438–458; these read IVLA…ISLL, LYAW…TTVN, LAVF…QILV, LQGI…NSTL, ALVS…GGLF, WAFG…PVAL, VPVW…VAAL, LVQT…FVVV, IYLT…VPLF, PVAA…GEVA, VIGH…ALGA, VGII…IGIA, AINV…GVVV, and VAAA…GVIA.

This sequence belongs to the major facilitator superfamily.

The protein resides in the cell membrane. Could be involved in fluoroquinolones efflux. This is Probable multidrug-efflux transporter MT1670 from Mycobacterium tuberculosis (strain CDC 1551 / Oshkosh).